A 79-amino-acid chain; its full sequence is Phosphoribosylformylglycinamidine synthase subunit PurS (79 aa).

This sequence belongs to the PurS family. Homodimer. Part of the FGAM synthase complex composed of 1 PurL, 1 PurQ and 2 PurS subunits.

The protein localises to the cytoplasm. The enzyme catalyses N(2)-formyl-N(1)-(5-phospho-beta-D-ribosyl)glycinamide + L-glutamine + ATP + H2O = 2-formamido-N(1)-(5-O-phospho-beta-D-ribosyl)acetamidine + L-glutamate + ADP + phosphate + H(+). It participates in purine metabolism; IMP biosynthesis via de novo pathway; 5-amino-1-(5-phospho-D-ribosyl)imidazole from N(2)-formyl-N(1)-(5-phospho-D-ribosyl)glycinamide: step 1/2. Functionally, part of the phosphoribosylformylglycinamidine synthase complex involved in the purines biosynthetic pathway. Catalyzes the ATP-dependent conversion of formylglycinamide ribonucleotide (FGAR) and glutamine to yield formylglycinamidine ribonucleotide (FGAM) and glutamate. The FGAM synthase complex is composed of three subunits. PurQ produces an ammonia molecule by converting glutamine to glutamate. PurL transfers the ammonia molecule to FGAR to form FGAM in an ATP-dependent manner. PurS interacts with PurQ and PurL and is thought to assist in the transfer of the ammonia molecule from PurQ to PurL. The chain is Phosphoribosylformylglycinamidine synthase subunit PurS from Mycobacterium leprae (strain TN).